The sequence spans 401 residues: Lipid-A-disaccharide synthase (401 aa).

The protein belongs to the LpxB family.

The enzyme catalyses a lipid X + a UDP-2-N,3-O-bis[(3R)-3-hydroxyacyl]-alpha-D-glucosamine = a lipid A disaccharide + UDP + H(+). It participates in bacterial outer membrane biogenesis; LPS lipid A biosynthesis. In terms of biological role, condensation of UDP-2,3-diacylglucosamine and 2,3-diacylglucosamine-1-phosphate to form lipid A disaccharide, a precursor of lipid A, a phosphorylated glycolipid that anchors the lipopolysaccharide to the outer membrane of the cell. This Rhodospirillum centenum (strain ATCC 51521 / SW) protein is Lipid-A-disaccharide synthase.